The primary structure comprises 150 residues: MKCPFCNASDTKVVDTRASEDDKIVRRRRECISCHKRFTTYERYDFNNLTVVKKDKNREAFDRDKVYRGMKKSCEKRPVPDSVLLEATKEIEVELTHSNKREVDSSEIGELIMKKLKKIDKVAYIRFASVYREFTDVKSFNEEISKLDNE.

The segment at 3–34 (CPFCNASDTKVVDTRASEDDKIVRRRRECISC) is a zinc-finger region. Residues 49–139 (LTVVKKDKNR…VYREFTDVKS (91 aa)) enclose the ATP-cone domain.

This sequence belongs to the NrdR family. Zn(2+) is required as a cofactor.

Its function is as follows. Negatively regulates transcription of bacterial ribonucleotide reductase nrd genes and operons by binding to NrdR-boxes. The protein is Transcriptional repressor NrdR of Finegoldia magna (strain ATCC 29328 / DSM 20472 / WAL 2508) (Peptostreptococcus magnus).